The primary structure comprises 324 residues: tRNA N6-adenosine threonylcarbamoyltransferase (324 aa).

Fe cation-binding residues include histidine 107, histidine 111, and tyrosine 127. Residues 127 to 131, aspartate 159, glycine 172, glutamate 176, and asparagine 257 contribute to the substrate site; that span reads YVSGG. Aspartate 285 lines the Fe cation pocket.

This sequence belongs to the KAE1 / TsaD family. In terms of assembly, monomer. Component of the KEOPS complex that consists of Kae1, Bud32, Cgi121 and Pcc1; the whole complex dimerizes. Fe(2+) is required as a cofactor.

The protein resides in the cytoplasm. The enzyme catalyses L-threonylcarbamoyladenylate + adenosine(37) in tRNA = N(6)-L-threonylcarbamoyladenosine(37) in tRNA + AMP + H(+). In terms of biological role, required for the formation of a threonylcarbamoyl group on adenosine at position 37 (t(6)A37) in tRNAs that read codons beginning with adenine. Is a component of the KEOPS complex that is probably involved in the transfer of the threonylcarbamoyl moiety of threonylcarbamoyl-AMP (TC-AMP) to the N6 group of A37. Kae1 likely plays a direct catalytic role in this reaction, but requires other protein(s) of the complex to fulfill this activity. The chain is tRNA N6-adenosine threonylcarbamoyltransferase from Pyrococcus furiosus (strain ATCC 43587 / DSM 3638 / JCM 8422 / Vc1).